Reading from the N-terminus, the 162-residue chain is Lectin BRA-3 (162 aa).

The first 24 residues, 1–24 (MQRSEIVQAVTLLVVVFAITTAEC), serve as a signal peptide directing secretion. The C-type lectin domain occupies 25–152 (TCPGNLDWQE…NKNKNFLCKM (128 aa)). Disulfide bonds link Cys26/Cys39, Cys56/Cys150, and Cys125/Cys142.

Homotetramer; disulfide-linked. As to expression, coelemic fluid.

Functionally, sugar-binding protein which recognizes specific carbohydrate structures and agglutinates a variety of animal cells by binding to cell-surface glycoproteins and glycolipids. Calcium-dependent lectin. Invertebrate lectins may be involved in defense functions. This Megabalanus rosa (Acorn barnacle) protein is Lectin BRA-3.